Consider the following 431-residue polypeptide: uncharacterized protein (431 aa).

2 disordered regions span residues 17 to 66 (VDPE…GQQA) and 81 to 415 (GSVT…ALPR). Residues 91–106 (DKADREPAARPRDPRS) show a composition bias toward basic and acidic residues. Residues 173 to 195 (TYRRRRPTAATPSRKKKARRGPK) are compositionally biased toward basic residues. The span at 235 to 244 (RTPGPVHSAA) shows a compositional bias: low complexity. The span at 299-312 (RMGGSSGGRGGTPG) shows a compositional bias: gly residues. A compositionally biased stretch (low complexity) spans 317-342 (RAAPGARPTAPDGAPGRWDGPADGPA). Residues 343 to 360 (PGLGRGGWGVGREAGGSG) are compositionally biased toward gly residues.

This is an uncharacterized protein from Homo sapiens (Human).